The following is a 187-amino-acid chain: Threonylcarbamoyl-AMP synthase (187 aa).

Residues 3 to 187 (QVLPADAAEL…ARSGTVIREG (185 aa)) enclose the YrdC-like domain.

It belongs to the SUA5 family. TsaC subfamily.

The protein resides in the cytoplasm. It carries out the reaction L-threonine + hydrogencarbonate + ATP = L-threonylcarbamoyladenylate + diphosphate + H2O. Functionally, required for the formation of a threonylcarbamoyl group on adenosine at position 37 (t(6)A37) in tRNAs that read codons beginning with adenine. Catalyzes the conversion of L-threonine, HCO(3)(-)/CO(2) and ATP to give threonylcarbamoyl-AMP (TC-AMP) as the acyladenylate intermediate, with the release of diphosphate. The polypeptide is Threonylcarbamoyl-AMP synthase (Shewanella pealeana (strain ATCC 700345 / ANG-SQ1)).